Reading from the N-terminus, the 282-residue chain is sn-glycerol-3-phosphate transport system permease protein UgpE (282 aa).

6 helical membrane-spanning segments follow: residues 14–34 (LILI…FVAS), 86–106 (MAIA…IVFF), 112–132 (MFFF…RILP), 146–168 (YAGL…QFFL), 201–221 (IAAL…WPLL), and 248–268 (WNYV…VVVL). Residues 78–269 (LWNSFVVAMA…IPLILVVVLM (192 aa)) form the ABC transmembrane type-1 domain.

The protein belongs to the binding-protein-dependent transport system permease family. As to quaternary structure, the complex is composed of two ATP-binding proteins (UgpC), two transmembrane proteins (UgpA and UgpE) and a solute-binding protein (UgpB).

It is found in the cell inner membrane. Functionally, part of the ABC transporter complex UgpBAEC involved in sn-glycerol-3-phosphate (G3P) import. Probably responsible for the translocation of the substrate across the membrane. This is sn-glycerol-3-phosphate transport system permease protein UgpE (ugpE) from Brucella abortus (strain 2308).